The following is a 173-amino-acid chain: Translation initiation factor IF-3 (173 aa).

The protein belongs to the IF-3 family. In terms of assembly, monomer.

The protein localises to the cytoplasm. In terms of biological role, IF-3 binds to the 30S ribosomal subunit and shifts the equilibrium between 70S ribosomes and their 50S and 30S subunits in favor of the free subunits, thus enhancing the availability of 30S subunits on which protein synthesis initiation begins. This is Translation initiation factor IF-3 from Clostridium tetani (strain Massachusetts / E88).